The chain runs to 183 residues: Ribosome-recycling factor (183 aa).

It belongs to the RRF family.

The protein localises to the cytoplasm. In terms of biological role, responsible for the release of ribosomes from messenger RNA at the termination of protein biosynthesis. May increase the efficiency of translation by recycling ribosomes from one round of translation to another. The polypeptide is Ribosome-recycling factor (Deinococcus deserti (strain DSM 17065 / CIP 109153 / LMG 22923 / VCD115)).